The chain runs to 234 residues: Adenosine 5'-phosphosulfate reductase (234 aa).

[4Fe-4S] cluster-binding residues include C120, C121, C203, and C206. Catalysis depends on C229, which acts as the Nucleophile; cysteine thiosulfonate intermediate.

It belongs to the PAPS reductase family. CysH subfamily. Requires [4Fe-4S] cluster as cofactor.

The protein localises to the cytoplasm. It catalyses the reaction [thioredoxin]-disulfide + sulfite + AMP + 2 H(+) = adenosine 5'-phosphosulfate + [thioredoxin]-dithiol. It functions in the pathway sulfur metabolism; hydrogen sulfide biosynthesis; sulfite from sulfate. Its function is as follows. Catalyzes the formation of sulfite from adenosine 5'-phosphosulfate (APS) using thioredoxin as an electron donor. This chain is Adenosine 5'-phosphosulfate reductase, found in Bacillus cereus (strain Q1).